The following is a 663-amino-acid chain: Cytochrome bo(3) ubiquinol oxidase subunit 1 (663 aa).

Residues 1–16 (MFGKLSLDAVPFHEPI) lie on the Periplasmic side of the membrane. Residues 17-35 (VMVTIAGIILGGLALVGLI) form a helical membrane-spanning segment. Topologically, residues 36–52 (TYFGKWTYLWKEWLTSV) are cytoplasmic. The chain crosses the membrane as a helical span at residues 53-80 (DHKRLGIMYIIVAIVMLLRGFADAIMMR). Residues Arg71 and Asp75 each contribute to the ubiquinone-8 site. Residues 81–95 (SQQALASAGEAGFLP) lie on the Periplasmic side of the membrane. Residues 96 to 132 (PHHYDQIFTAHGVIMIFFVAMPFVIGLMNLVVPLQIG) traverse the membrane as a helical segment. Position 98 (His98) interacts with ubiquinone-8. Heme b is bound at residue His106. Topologically, residues 133–137 (ARDVA) are cytoplasmic. Residues 138-161 (FPFLNNLSFWFTVVGVILVNVSLG) form a helical membrane-spanning segment. Topologically, residues 162–184 (VGEFAQTGWLAYPPLSGIEYSPG) are periplasmic. Trp170 contacts heme b. The chain crosses the membrane as a helical span at residues 185–215 (VGVDYWIWSLQLSGIGTTLTGINFFVTILKM). The Cytoplasmic portion of the chain corresponds to 216-224 (RAPGMTMFK). A helical membrane pass occupies residues 225–260 (MPVFTWASLCANVLIIASFPILTVTVALLTLDRYLG). The Periplasmic portion of the chain corresponds to 261 to 270 (THFFTNDMGG). Residues 271–307 (NMMMYINLIWAWGHPEVYILILPVFGVFSEIAATFSR) form a helical membrane-spanning segment. His284 contacts Cu(2+). The 1'-histidyl-3'-tyrosine (His-Tyr) cross-link spans 284-288 (HPEVY). Tyr288 contributes to the Fe(II)-heme o binding site. Topologically, residues 308–311 (KRLF) are cytoplasmic. A helical membrane pass occupies residues 312–326 (GYTSLVWATVCITVL). The Periplasmic portion of the chain corresponds to 327-340 (SFIVWLHHFFTMGA). Cu(2+)-binding residues include His333 and His334. Residues 341–369 (GANVNAFFGITTMIIAIPTGVKIFNWLFT) traverse the membrane as a helical segment. Residues 370–377 (MYQGRIVF) lie on the Cytoplasmic side of the membrane. Residues 378–409 (HSAMLWTIGFIVTFSVGGMTGVLLAVPGADFV) form a helical membrane-spanning segment. The Periplasmic segment spans residues 410–412 (LHN). Residues His411 and His419 each contribute to the Fe(II)-heme o site. A helical membrane pass occupies residues 413-445 (SLFLIAHFHNVIIGGVVFGCFAGMTYWWPKAFG). His421 serves as a coordination point for heme b. At 446-448 (FKL) the chain is on the cytoplasmic side. Residues 449 to 477 (NETWGKRAFWFWIIGFFVAFMPLYALGFM) traverse the membrane as a helical segment. Topologically, residues 478–489 (GMTRRLSQQIDP) are periplasmic. Positions 481 and 482 each coordinate heme b. Residues 490–521 (QFHTMLMIAASGAVLIALGILCLVIQMYVSIR) traverse the membrane as a helical segment. Residues 522–587 (DRDQNRDLTG…DHYEEIHMPK (66 aa)) are Cytoplasmic-facing. A helical transmembrane segment spans residues 588-606 (NSGAGIVIAAFSTIFGFAM). Topologically, residues 607–613 (IWHIWWL) are periplasmic. The chain crosses the membrane as a helical span at residues 614 to 632 (AIVGFAGMIITWIVKSFDE). Residues 633–663 (DVDYYVPVAEIEKLENQHFDEITKAGLKNGN) lie on the Cytoplasmic side of the membrane.

The protein belongs to the heme-copper respiratory oxidase family. In terms of assembly, the cytochrome bo(3) ubiquinol oxidase complex is a heterooctamer of two A chains, two B chains, two C chains and two D chains. It depends on Cu(2+) as a cofactor. Heme b is required as a cofactor. Fe(II)-heme o serves as cofactor.

It is found in the cell inner membrane. The catalysed reaction is 2 a ubiquinol + O2 + n H(+)(in) = 2 a ubiquinone + 2 H2O + n H(+)(out). Its function is as follows. Cytochrome bo(3) ubiquinol oxidase is the terminal enzyme in the aerobic respiratory chain of E.coli that predominates when cells are grown at high aeration. Catalyzes the four-electron reduction of O2 to water, using a ubiquinol as a membrane soluble electron donor for molecular oxygen reduction; ubiquinol-8 is the natural substrate for E.coli. Has proton pump activity across the membrane in addition to electron transfer, pumping 2 protons/electron and generating a proton motive force. All the redox centers of this enzyme complex are located within the largest subunit, subunit I. Protons are probably pumped via D- and K- channels found in this subunit. This is Cytochrome bo(3) ubiquinol oxidase subunit 1 (cyoB) from Escherichia coli O157:H7.